Consider the following 194-residue polypeptide: Protein LURP-one-related 10 (194 aa).

It belongs to the LOR family.

In terms of biological role, might be related to the phospholipid scramblase and tubby-like superfamily of membrane tethered transcription factors. The sequence is that of Protein LURP-one-related 10 from Arabidopsis thaliana (Mouse-ear cress).